Here is a 432-residue protein sequence, read N- to C-terminus: MTEQIRIIDAKEHVNEEVKIGAWLTDKRSSGKITFLQLRDGSAYFQGVVSKADVPEEVFSLAKELRQESSMWITGVIHQDSRSHFGYEIEVRNIELVGDSHDYPISPKEHGIEFLLDHRHLWLRSKRQFAIQQIRNEMIRATFEFFNNEGFIKMDPPILTDSAPEGTTELFETDYFDKKAYLSQSGQLYAEAGAMAYGKVFTCGPVFRAEKSKTRRHLTEFWMIEPEMAFCHQEESLKVQERYVAYLVQSVLDNCAYPLHLLDRDPEVLKQYTKLPYPRITYKQAIKMLQDAGMDVKYGDDFGSPEETYLSDQFDQPVFVLNYPKTIKPFYMLTDPEDDQQYVCADMLAPEGYGEIIGGSERETDYDTLKNAIEHAGLDLDEYEWYLDLRKYGSVPHSGFGLGLERAITWVCKLDHLREAIPFPRMINRLKP.

It belongs to the class-II aminoacyl-tRNA synthetase family. As to quaternary structure, homodimer.

The protein resides in the cytoplasm. The catalysed reaction is tRNA(Asn) + L-asparagine + ATP = L-asparaginyl-tRNA(Asn) + AMP + diphosphate + H(+). This Lacticaseibacillus paracasei (strain ATCC 334 / BCRC 17002 / CCUG 31169 / CIP 107868 / KCTC 3260 / NRRL B-441) (Lactobacillus paracasei) protein is Asparagine--tRNA ligase.